An 879-amino-acid polypeptide reads, in one-letter code: Phosphoenolpyruvate carboxylase (879 aa).

Active-site residues include His138 and Lys545.

This sequence belongs to the PEPCase type 1 family. Requires Mg(2+) as cofactor.

It carries out the reaction oxaloacetate + phosphate = phosphoenolpyruvate + hydrogencarbonate. In terms of biological role, forms oxaloacetate, a four-carbon dicarboxylic acid source for the tricarboxylic acid cycle. This is Phosphoenolpyruvate carboxylase from Actinobacillus pleuropneumoniae serotype 5b (strain L20).